The following is a 2032-amino-acid chain: Cytoskeleton-associated protein 5 (2032 aa).

TOG stretches follow at residues 1 to 223 (MGDD…KLPT), 268 to 502 (YELL…LVHG), and 588 to 817 (SIEV…GQSP). The residue at position 48 (Lys-48) is an N6-acetyllysine. HEAT repeat units follow at residues 159 to 197 (IISLKPIIKVLPKLFESRDKAVRDEAKLFAIEIYRWNRD), 356 to 394 (GQYAGHVVPTILEKFKEKKPQVVQALQEAIDAIFLTTTL), and 434 to 472 (KSLLKPFCAALLKHINDSAPEVRDAAFEALGTALKVVGE). Positions 501–579 (HGKKSGLATE…GTKNKKGLET (79 aa)) are disordered. The HEAT 4 repeat unit spans residues 750-788 (ELNVKAFISNVKTALAATNPAVRTSAITLLGVMYLYVGP). A disordered region spans residues 811–848 (KMQGQSPPAPTRGIAKHSTSATDEGEDGEEPGEGGNDV). At Ser-816 the chain carries Phosphoserine. The segment covering 833–842 (DEGEDGEEPG) has biased composition (acidic residues). TOG stretches follow at residues 853–1081 (PRIE…ANMP) and 1193–1428 (IEQL…KRPS). 3 HEAT repeats span residues 855–893 (IEISDKITSELVSKIGDKNWKIRKEGLDEVAGIINEAKF), 936–974 (RQHVKNLGIPVITVLGDSKNNVRAAALATVNAWAEQTGM), and 1013–1051 (PTDLILCVPHLYSCLKDRNGDVRKKAQDALPFFMMHLGY). Residues 1078–1095 (ANMPSKPAAPAKAMSKPM) show a composition bias toward low complexity. The interval 1078-1156 (ANMPSKPAAP…KTTLKEDDDK (79 aa)) is disordered. HEAT repeat units lie at residues 1284 to 1322 (ENEASSFIPYLILKVGEPKDVIRKDVRAILNRMCLVYPA), 1324 to 1357 (KMFPFIMEGTKSKNSKQRAECLEELGCLIESYGM), and 1361 to 1399 (QPTPGKALKEIAIHIGDRDNAVRNAALNTIVTVYNVHGD). The segment at 1420-1459 (IKRSAKRPSAAPVKQAEEKPQRTQNINSNANMLRKGPAED) is disordered. A compositionally biased stretch (polar residues) spans 1441–1450 (RTQNINSNAN). Ser-1469 carries the phosphoserine modification. Positions 1801 to 1822 (SMDQTGSKSDKETEKGASRIDE) are disordered. The span at 1808–1822 (KSDKETEKGASRIDE) shows a compositional bias: basic and acidic residues. Residue Ser-1861 is modified to Phosphoserine. 2 disordered regions span residues 1893-1926 (SKGRIPTSTGISPQMEVTCVPTPTSTVSSLGNTN) and 1948-2032 (LDNT…SSRK). The segment covering 1909-1921 (VTCVPTPTSTVSS) has biased composition (low complexity). Residues 1932-1957 (PSVYLERLKILRQRCGLDNTKQDDRP) form an interaction with TACC3 region. Positions 1972–1983 (ASSTDMLHSKLS) are enriched in polar residues. The span at 1984-1997 (QLRESREQHQHSDL) shows a compositional bias: basic and acidic residues. Positions 2002–2015 (THSAGTMTSSSSTT) are enriched in low complexity. Over residues 2018–2032 (DDLKKRLERIKSSRK) the composition is skewed to basic and acidic residues.

It belongs to the TOG/XMAP215 family. As to quaternary structure, interacts with TACC1. Interacts with HNRNPA2B1. Interacts with TACC3 independently of clathrin. Interacts with TACC3 and clathrin forming the TACC3/ch-TOG/clathrin complex located at spindle inter-microtubules bridges. Interacts with NDC80; indicative for an association with the NDC80 complex. Interacts with SLAIN2. Interacts with SLAIN1.

It is found in the cytoplasm. The protein localises to the cytoskeleton. It localises to the microtubule organizing center. Its subcellular location is the centrosome. The protein resides in the spindle pole. It is found in the spindle. The protein localises to the chromosome. It localises to the centromere. Its subcellular location is the kinetochore. In terms of biological role, binds to the plus end of microtubules and regulates microtubule dynamics and microtubule organization. Acts as a processive microtubule polymerase. Promotes cytoplasmic microtubule nucleation and elongation. Plays a major role in organizing spindle poles. In spindle formation protects kinetochore microtubules from depolymerization by KIF2C and has an essential role in centrosomal microtubule assembly independently of KIF2C activity. Contributes to centrosome integrity. Acts as a component of the TACC3/ch-TOG/clathrin complex proposed to contribute to stabilization of kinetochore fibers of the mitotic spindle by acting as inter-microtubule bridge. The TACC3/ch-TOG/clathrin complex is required for the maintenance of kinetochore fiber tension. Enhances the strength of NDC80 complex-mediated kinetochore-tip microtubule attachments. This is Cytoskeleton-associated protein 5 from Mus musculus (Mouse).